Here is a 117-residue protein sequence, read N- to C-terminus: Non-specific lipid-transfer protein Lac s 1 (117 aa).

Residues 1 to 25 (MARMAMMILCVVLTCMVVATPYTEA) form the signal peptide. 4 cysteine pairs are disulfide-bonded: Cys-29–Cys-76, Cys-39–Cys-53, Cys-54–Cys-99, and Cys-74–Cys-113.

This sequence belongs to the plant LTP family.

In terms of biological role, plant non-specific lipid-transfer proteins transfer phospholipids as well as galactolipids across membranes. May play a role in wax or cutin deposition in the cell walls of expanding epidermal cells and certain secretory tissues. The protein is Non-specific lipid-transfer protein Lac s 1 of Lactuca sativa (Garden lettuce).